A 612-amino-acid polypeptide reads, in one-letter code: Dihydroxy-acid dehydratase (612 aa).

Asp-81 contributes to the Mg(2+) binding site. Cys-122 serves as a coordination point for [2Fe-2S] cluster. Mg(2+)-binding residues include Asp-123 and Lys-124. Lys-124 is subject to N6-carboxylysine. Cys-196 is a [2Fe-2S] cluster binding site. Residue Glu-492 participates in Mg(2+) binding. The active-site Proton acceptor is Ser-518.

Belongs to the IlvD/Edd family. Homodimer. The cofactor is [2Fe-2S] cluster. It depends on Mg(2+) as a cofactor.

It catalyses the reaction (2R)-2,3-dihydroxy-3-methylbutanoate = 3-methyl-2-oxobutanoate + H2O. It carries out the reaction (2R,3R)-2,3-dihydroxy-3-methylpentanoate = (S)-3-methyl-2-oxopentanoate + H2O. The protein operates within amino-acid biosynthesis; L-isoleucine biosynthesis; L-isoleucine from 2-oxobutanoate: step 3/4. Its pathway is amino-acid biosynthesis; L-valine biosynthesis; L-valine from pyruvate: step 3/4. In terms of biological role, functions in the biosynthesis of branched-chain amino acids. Catalyzes the dehydration of (2R,3R)-2,3-dihydroxy-3-methylpentanoate (2,3-dihydroxy-3-methylvalerate) into 2-oxo-3-methylpentanoate (2-oxo-3-methylvalerate) and of (2R)-2,3-dihydroxy-3-methylbutanoate (2,3-dihydroxyisovalerate) into 2-oxo-3-methylbutanoate (2-oxoisovalerate), the penultimate precursor to L-isoleucine and L-valine, respectively. The chain is Dihydroxy-acid dehydratase from Paracoccus denitrificans (strain Pd 1222).